A 539-amino-acid chain; its full sequence is Cell division control protein 6 homolog (539 aa).

The segment at 1-40 (MPAIAGPSSSPQKHVVGSRSESIGGVRSAEVNTSRKRKLI) is disordered. Residues 35–38 (RKRK) carry the Nuclear localization signal motif.

This sequence belongs to the CDC6/cdc18 family. Highly expressed in roots, flower buds and etiolated seedlings. Expressed in leaves and stems. Highly expressed in proliferating cells such as root meristems, leaf primordia and young growing leaves, as well as cells undergoing endoreduplication cycles.

The protein resides in the nucleus. May be involved in the initiation of DNA replication. May play a role in endoreduplication. Could act as one of the factors that contributes to maintain endoreduplication competence. The chain is Cell division control protein 6 homolog from Arabidopsis thaliana (Mouse-ear cress).